We begin with the raw amino-acid sequence, 211 residues long: MIKGCGCSDGLTDRTRYEEVVLDTMLYSAQLKERVARQNSAVIVAMARMIAGTFEDGGKVLLCGNGGSAADAQHLATELTIRYRSSVERPALPAIALSTDTSALTAGANDLGYDAVFARLVEAYGREGDILLGLSTSGNSQSVINALDFARQQGMKTLALLGGNGGLMKGLADLELIVPHSGSADRVQECHITIGHVLIDLVERMLGYCRL.

An SIS domain is found at 50 to 211 (IAGTFEDGGK…VERMLGYCRL (162 aa)). Residue 65-67 (NGG) participates in substrate binding. The Zn(2+) site is built by H74 and E78. Substrate is bound by residues E78, 109-110 (ND), 135-137 (STS), S140, and Q188. Q188 and H196 together coordinate Zn(2+).

Belongs to the SIS family. GmhA subfamily. Zn(2+) is required as a cofactor.

Its subcellular location is the cytoplasm. The enzyme catalyses 2 D-sedoheptulose 7-phosphate = D-glycero-alpha-D-manno-heptose 7-phosphate + D-glycero-beta-D-manno-heptose 7-phosphate. It participates in carbohydrate biosynthesis; D-glycero-D-manno-heptose 7-phosphate biosynthesis; D-glycero-alpha-D-manno-heptose 7-phosphate and D-glycero-beta-D-manno-heptose 7-phosphate from sedoheptulose 7-phosphate: step 1/1. Its function is as follows. Catalyzes the isomerization of sedoheptulose 7-phosphate in D-glycero-D-manno-heptose 7-phosphate. The protein is Phosphoheptose isomerase of Pelodictyon phaeoclathratiforme (strain DSM 5477 / BU-1).